The sequence spans 219 residues: Leucyl/phenylalanyl-tRNA--protein transferase (219 aa).

Belongs to the L/F-transferase family.

The protein resides in the cytoplasm. It catalyses the reaction N-terminal L-lysyl-[protein] + L-leucyl-tRNA(Leu) = N-terminal L-leucyl-L-lysyl-[protein] + tRNA(Leu) + H(+). It carries out the reaction N-terminal L-arginyl-[protein] + L-leucyl-tRNA(Leu) = N-terminal L-leucyl-L-arginyl-[protein] + tRNA(Leu) + H(+). The catalysed reaction is L-phenylalanyl-tRNA(Phe) + an N-terminal L-alpha-aminoacyl-[protein] = an N-terminal L-phenylalanyl-L-alpha-aminoacyl-[protein] + tRNA(Phe). Functions in the N-end rule pathway of protein degradation where it conjugates Leu, Phe and, less efficiently, Met from aminoacyl-tRNAs to the N-termini of proteins containing an N-terminal arginine or lysine. This Leptospira borgpetersenii serovar Hardjo-bovis (strain JB197) protein is Leucyl/phenylalanyl-tRNA--protein transferase.